Here is a 261-residue protein sequence, read N- to C-terminus: Putative ankyrin repeat protein L99 (261 aa).

ANK repeat units follow at residues K21–A50, H51–S80, D81–A110, Q112–A140, N142–A170, D171–C203, and N231–S259.

This is Putative ankyrin repeat protein L99 from Acanthamoeba polyphaga (Amoeba).